A 252-amino-acid polypeptide reads, in one-letter code: 2-succinyl-6-hydroxy-2,4-cyclohexadiene-1-carboxylate synthase (252 aa).

Belongs to the AB hydrolase superfamily. MenH family. Monomer.

The catalysed reaction is 5-enolpyruvoyl-6-hydroxy-2-succinyl-cyclohex-3-ene-1-carboxylate = (1R,6R)-6-hydroxy-2-succinyl-cyclohexa-2,4-diene-1-carboxylate + pyruvate. The protein operates within quinol/quinone metabolism; 1,4-dihydroxy-2-naphthoate biosynthesis; 1,4-dihydroxy-2-naphthoate from chorismate: step 3/7. Its pathway is quinol/quinone metabolism; menaquinone biosynthesis. In terms of biological role, catalyzes a proton abstraction reaction that results in 2,5-elimination of pyruvate from 2-succinyl-5-enolpyruvyl-6-hydroxy-3-cyclohexene-1-carboxylate (SEPHCHC) and the formation of 2-succinyl-6-hydroxy-2,4-cyclohexadiene-1-carboxylate (SHCHC). The chain is 2-succinyl-6-hydroxy-2,4-cyclohexadiene-1-carboxylate synthase from Escherichia fergusonii (strain ATCC 35469 / DSM 13698 / CCUG 18766 / IAM 14443 / JCM 21226 / LMG 7866 / NBRC 102419 / NCTC 12128 / CDC 0568-73).